A 380-amino-acid polypeptide reads, in one-letter code: Glucose-1-phosphate adenylyltransferase (380 aa).

Alpha-D-glucose 1-phosphate is bound by residues Gly-164, 179-180 (EK), and Ser-190.

The protein belongs to the bacterial/plant glucose-1-phosphate adenylyltransferase family. Homotetramer.

The catalysed reaction is alpha-D-glucose 1-phosphate + ATP + H(+) = ADP-alpha-D-glucose + diphosphate. It functions in the pathway glycan biosynthesis; glycogen biosynthesis. Involved in the biosynthesis of ADP-glucose, a building block required for the elongation reactions to produce glycogen. Catalyzes the reaction between ATP and alpha-D-glucose 1-phosphate (G1P) to produce pyrophosphate and ADP-Glc. The protein is Glucose-1-phosphate adenylyltransferase of Streptococcus sanguinis (strain SK36).